Here is a 282-residue protein sequence, read N- to C-terminus: Phosphatidylserine decarboxylase proenzyme (282 aa).

Active-site charge relay system; for autoendoproteolytic cleavage activity residues include Asp88, His144, and Ser247. Ser247 serves as the catalytic Schiff-base intermediate with substrate; via pyruvic acid; for decarboxylase activity. Pyruvic acid (Ser); by autocatalysis is present on Ser247.

The protein belongs to the phosphatidylserine decarboxylase family. PSD-B subfamily. Prokaryotic type I sub-subfamily. Heterodimer of a large membrane-associated beta subunit and a small pyruvoyl-containing alpha subunit. Pyruvate serves as cofactor. Is synthesized initially as an inactive proenzyme. Formation of the active enzyme involves a self-maturation process in which the active site pyruvoyl group is generated from an internal serine residue via an autocatalytic post-translational modification. Two non-identical subunits are generated from the proenzyme in this reaction, and the pyruvate is formed at the N-terminus of the alpha chain, which is derived from the carboxyl end of the proenzyme. The autoendoproteolytic cleavage occurs by a canonical serine protease mechanism, in which the side chain hydroxyl group of the serine supplies its oxygen atom to form the C-terminus of the beta chain, while the remainder of the serine residue undergoes an oxidative deamination to produce ammonia and the pyruvoyl prosthetic group on the alpha chain. During this reaction, the Ser that is part of the protease active site of the proenzyme becomes the pyruvoyl prosthetic group, which constitutes an essential element of the active site of the mature decarboxylase.

The protein resides in the cell membrane. The catalysed reaction is a 1,2-diacyl-sn-glycero-3-phospho-L-serine + H(+) = a 1,2-diacyl-sn-glycero-3-phosphoethanolamine + CO2. It functions in the pathway phospholipid metabolism; phosphatidylethanolamine biosynthesis; phosphatidylethanolamine from CDP-diacylglycerol: step 2/2. Catalyzes the formation of phosphatidylethanolamine (PtdEtn) from phosphatidylserine (PtdSer). The polypeptide is Phosphatidylserine decarboxylase proenzyme (Xanthomonas campestris pv. campestris (strain 8004)).